The primary structure comprises 180 residues: Large ribosomal subunit protein uL5 (180 aa).

This sequence belongs to the universal ribosomal protein uL5 family. In terms of assembly, part of the 50S ribosomal subunit; part of the 5S rRNA/L5/L18/L25 subcomplex. Contacts the 5S rRNA and the P site tRNA. Forms a bridge to the 30S subunit in the 70S ribosome.

This is one of the proteins that bind and probably mediate the attachment of the 5S RNA into the large ribosomal subunit, where it forms part of the central protuberance. In the 70S ribosome it contacts protein S13 of the 30S subunit (bridge B1b), connecting the 2 subunits; this bridge is implicated in subunit movement. Contacts the P site tRNA; the 5S rRNA and some of its associated proteins might help stabilize positioning of ribosome-bound tRNAs. The sequence is that of Large ribosomal subunit protein uL5 from Lacticaseibacillus casei (strain BL23) (Lactobacillus casei).